The following is a 273-amino-acid chain: DnaJ homolog subfamily C member 27 (273 aa).

The tract at residues methionine 1 to lysine 18 is required for interaction with MAPK1. GTP is bound by residues glycine 23–serine 30, aspartate 71–aspartate 75, and asparagine 134–aspartate 137. The region spanning aspartate 217–lysine 273 is the J domain.

It belongs to the small GTPase superfamily. Rab family. In terms of assembly, interacts directly with MAPK1 (wild-type and kinase-deficient forms). Interacts directly (in GTP-bound form) with MAP2K1 (wild-type and kinase-deficient forms).

The protein resides in the nucleus. Functionally, GTPase which can activate the MEK/ERK pathway and induce cell transformation when overexpressed. May act as a nuclear scaffold for MAPK1, probably by association with MAPK1 nuclear export signal leading to enhanced ERK1/ERK2 signaling. The polypeptide is DnaJ homolog subfamily C member 27 (DNAJC27) (Bos taurus (Bovine)).